The chain runs to 216 residues: Large ribosomal subunit protein uL3 (216 aa).

Q153 bears the N5-methylglutamine mark.

Belongs to the universal ribosomal protein uL3 family. In terms of assembly, part of the 50S ribosomal subunit. Forms a cluster with proteins L14 and L19. Post-translationally, methylated by PrmB.

One of the primary rRNA binding proteins, it binds directly near the 3'-end of the 23S rRNA, where it nucleates assembly of the 50S subunit. The polypeptide is Large ribosomal subunit protein uL3 (Burkholderia ambifaria (strain MC40-6)).